The sequence spans 263 residues: Inactive adenylate kinase (263 aa).

Belongs to the adenylate kinase family.

It localises to the cytoplasm. Its function is as follows. Lacks adenylate kinase activity. The polypeptide is Inactive adenylate kinase (Plasmodium falciparum (isolate 3D7)).